The chain runs to 435 residues: Methylenetetrahydrofolate--tRNA-(uracil-5-)-methyltransferase TrmFO (435 aa).

7–12 (GAGLAG) is an FAD binding site.

Belongs to the MnmG family. TrmFO subfamily. It depends on FAD as a cofactor.

The protein localises to the cytoplasm. The enzyme catalyses uridine(54) in tRNA + (6R)-5,10-methylene-5,6,7,8-tetrahydrofolate + NADH + H(+) = 5-methyluridine(54) in tRNA + (6S)-5,6,7,8-tetrahydrofolate + NAD(+). It catalyses the reaction uridine(54) in tRNA + (6R)-5,10-methylene-5,6,7,8-tetrahydrofolate + NADPH + H(+) = 5-methyluridine(54) in tRNA + (6S)-5,6,7,8-tetrahydrofolate + NADP(+). In terms of biological role, catalyzes the folate-dependent formation of 5-methyl-uridine at position 54 (M-5-U54) in all tRNAs. In Thermotoga sp. (strain RQ2), this protein is Methylenetetrahydrofolate--tRNA-(uracil-5-)-methyltransferase TrmFO.